Reading from the N-terminus, the 161-residue chain is Cytochrome b6-f complex subunit 4 (161 aa).

3 helical membrane passes run 37 to 57 (LLYI…GLAV), 96 to 116 (LLGV…PFIE), and 132 to 152 (TVFL…TFPI).

The protein belongs to the cytochrome b family. PetD subfamily. In terms of assembly, the 4 large subunits of the cytochrome b6-f complex are cytochrome b6, subunit IV (17 kDa polypeptide, PetD), cytochrome f and the Rieske protein, while the 4 small subunits are PetG, PetL, PetM and PetN. The complex functions as a dimer.

Its subcellular location is the cellular thylakoid membrane. Component of the cytochrome b6-f complex, which mediates electron transfer between photosystem II (PSII) and photosystem I (PSI), cyclic electron flow around PSI, and state transitions. The chain is Cytochrome b6-f complex subunit 4 from Cyanothece sp. (strain PCC 7425 / ATCC 29141).